Reading from the N-terminus, the 97-residue chain is Integration host factor subunit alpha (97 aa).

The protein belongs to the bacterial histone-like protein family. In terms of assembly, heterodimer of an alpha and a beta chain.

In terms of biological role, this protein is one of the two subunits of integration host factor, a specific DNA-binding protein that functions in genetic recombination as well as in transcriptional and translational control. The protein is Integration host factor subunit alpha of Acinetobacter baylyi (strain ATCC 33305 / BD413 / ADP1).